The primary structure comprises 590 residues: MKKYPKIGIRPTIDGRQGGVRESLEEKTMNLAKAVAELITSNLKNGDGTPVECVIADGTIGRVAESAACAEKFEREGVGATITVTSCWCYGAETMDMNPYYPKAVWGFNGTERPGAVYLAAVLAGHAQKGLPAFGIYGRDVQDLNDNSIPADVAEKILRFARAAQAVATMRGKSYLSMGSVSMGIAGSIVNPDFFQEYLGMRNESIDLTEIIRRMAEGIYDKEEYAKAMAWTEKYCKKNEGNDFNIPEKTKTRAQKDEDWEFIVKMTIIMRDLMQGNPKLKELGFKEEALGHNAIAAGFQGQRQWTDFYPNGDFSEALLNTSFDWNGIREAFVVATENDACNGVAMLFGHLLTNRAQIFSDVRTYWSPEAVKRVTGKELTGMAANGIIHLINSGATTLDGTGQQTNANGEPAMKPCWEITEGEVEKCLEATTWYPANRDYFRGGGFSSNFLSKGGMPVTMMRLNLIKGLGPVLQIAEGWTVEIDPEIHKLLDERTDRTWPTTWFVPRLCDKPAFKDVYSVMNNWGANHGAISYGHIGQDVITLASMLRIPVCMHNVEEDQIFRPAAWNAFGMDKEGADYRACTTYGPIYK.

Catalysis depends on proton acceptor residues glutamate 337 and aspartate 361. Residues glutamate 337, aspartate 361, and histidine 528 each coordinate Mn(2+).

This sequence belongs to the L-fucose isomerase family. Mn(2+) is required as a cofactor.

The protein localises to the cytoplasm. The catalysed reaction is L-fucose = L-fuculose. It functions in the pathway carbohydrate degradation; L-fucose degradation; L-lactaldehyde and glycerone phosphate from L-fucose: step 1/3. Its function is as follows. Converts the aldose L-fucose into the corresponding ketose L-fuculose. The chain is L-fucose isomerase from Bacteroides fragilis (strain YCH46).